A 147-amino-acid polypeptide reads, in one-letter code: MPSYELALVLRQLPRPELISVIRRTAESILDKGGIIRKLENLGSRALPHKVSEHGVVHREGTHFTIAFDTAPTKIADLKEEFGRDIDIIRRYIFKVEEPEQKPCTLHEEMLPPAYRKDVQEIIAAAQKKQKKKFNYNSGLDYYPFQK.

This sequence belongs to the bacterial ribosomal protein bS6 family. As to quaternary structure, component of the mitochondrial ribosome small subunit (28S) which comprises a 12S rRNA and about 30 distinct proteins.

Its subcellular location is the mitochondrion. In Drosophila melanogaster (Fruit fly), this protein is Small ribosomal subunit protein bS6m (mRpS6).